The following is a 417-amino-acid chain: Solute carrier family 25 member 46-A (417 aa).

Residues 1–13 are compositionally biased toward basic and acidic residues; it reads MQPRRPDRFDGLE. Positions 1–90 are disordered; sequence MQPRRPDRFD…AFGEENSNSA (90 aa). The segment covering 31-41 has biased composition (low complexity); the sequence is SSFPARSFSSS. The stretch at 95-186 is one Solcar 1 repeat; sequence QLNRFAGFGI…GILSEFTHLP (92 aa). The next 6 membrane-spanning stretches (helical) occupy residues 102-122, 162-182, 198-218, 257-277, 313-333, and 382-402; these read FGIG…CIVL, MGST…LSEF, IGGH…FYSA, LLPL…HYIV, FPEL…LYPL, and LGFY…AIVL. One copy of the Solcar 2 repeat lies at 310-415; sequence EDYFPELIAN…KIIYSSVVQT (106 aa).

Belongs to the mitochondrial carrier (TC 2.A.29) family.

The protein resides in the mitochondrion outer membrane. Its function is as follows. May play a role in mitochondrial dynamics by controlling mitochondrial membrane fission. This Xenopus laevis (African clawed frog) protein is Solute carrier family 25 member 46-A (slc25a46-a).